The chain runs to 283 residues: PTS system mannose-specific EIID component (283 aa).

Met1 carries the N-formylmethionine modification. Residues 1–14 (MVDTTQTTTEKKLT) lie on the Cytoplasmic side of the membrane. Positions 11 to 281 (KKLTQSDIRG…GIAGYACGLL (271 aa)) constitute a PTS EIID domain. Residues 15 to 52 (QSDIRGVFLRSNLFQGSWNFERMQALGFCFSMVPAIRR) lie within the membrane without spanning it. The Cytoplasmic portion of the chain corresponds to 53–59 (LYPENNE). An intramembrane segment occupies 60 to 92 (ARKQAIRRHLEFFNTQPFVAAPILGVTLALEEQ). At 93–100 (RANGAEID) the chain is on the cytoplasmic side. The hydrophobic stretch at 101-140 (DGAINGIKVGLMGPLAGVGDPIFWGTVRPVFAALGAGIAM) threads the membrane. The Periplasmic segment spans residues 141–144 (SGSL). Over 145–173 (LGPLLFFILFNLVRLATRYYGVAYGYSKG) the chain traverses the membrane. Residues 174-183 (IDIVKDMGGG) lie on the Cytoplasmic side of the membrane. A transmembrane helix spans residues 184–209 (FLQKLTEGASILGLFVMGALVNKWTH). Over 210-241 (VNIPLVVSRITDQTGKEHVTTVQTILDQLMPG) the chain is Periplasmic. A transmembrane span lies at residues 242-255 (LVPLLLTFACMWLL). Over 256–261 (RKKVNP) the chain is Cytoplasmic. At 262 to 280 (LWIIVGFFVIGIAGYACGL) the chain is embedded in the membrane. The Periplasmic segment spans residues 281 to 283 (LGL).

In terms of assembly, homotrimer of protomers that are composed of two subunits, IIC and IID.

The protein localises to the cell inner membrane. The phosphoenolpyruvate-dependent sugar phosphotransferase system (sugar PTS), a major carbohydrate active transport system, catalyzes the phosphorylation of incoming sugar substrates concomitantly with their translocation across the cell membrane. The enzyme II ManXYZ PTS system is involved in mannose transport. The protein is PTS system mannose-specific EIID component (manZ) of Escherichia coli O157:H7.